Consider the following 323-residue polypeptide: GDP-mannose 4,6-dehydratase (323 aa).

Residues 11-14 (TGQD), R36, 59-60 (DM), and 81-85 (LAAQS) each bind NADP(+). Residue T126 is part of the active site. Catalysis depends on nucleophile residues E128 and Y150. Residues K154, H180, and R185 each coordinate NADP(+).

The protein belongs to the NAD(P)-dependent epimerase/dehydratase family. GDP-mannose 4,6-dehydratase subfamily. In terms of assembly, homotetramer. Requires NADP(+) as cofactor.

It catalyses the reaction GDP-alpha-D-mannose = GDP-4-dehydro-alpha-D-rhamnose + H2O. It functions in the pathway bacterial outer membrane biogenesis; lipopolysaccharide biosynthesis. Catalyzes the conversion of GDP-D-mannose to GDP-4-dehydro-6-deoxy-D-mannose. This is GDP-mannose 4,6-dehydratase from Pseudomonas aeruginosa (strain ATCC 15692 / DSM 22644 / CIP 104116 / JCM 14847 / LMG 12228 / 1C / PRS 101 / PAO1).